A 158-amino-acid polypeptide reads, in one-letter code: Snaclec convulxin subunit alpha (158 aa).

The first 23 residues, 1–23 (MGRFIFVSFGLLVLFLSLSGTGA), serve as a signal peptide directing secretion. Disulfide bonds link C27-C38, C55-C152, and C127-C144. A C-type lectin domain is found at 34–158 (YDQHCYRIFN…PFVCKFPPQC (125 aa)).

This sequence belongs to the snaclec family. In terms of assembly, tetramer of heterodimers of alpha and beta subunits (alphabeta)(4); disulfide-linked. Expressed by the venom gland.

It is found in the secreted. Its function is as follows. Snake venom lectin that activates platelets by binding to the platelet collagen receptor glycoprotein VI (GP6). The indirect activation of integrin alpha-IIb/beta-3 (ITGA2B/ITGB3) also induced by the toxin is upstream the cytoskeletal translocation of GPIb, FcRgamma (FCER1G) and 14-3-3zeta (YWHAZ). The chain is Snaclec convulxin subunit alpha from Crotalus durissus terrificus (South American rattlesnake).